A 463-amino-acid polypeptide reads, in one-letter code: L-seryl-tRNA(Sec) selenium transferase (463 aa).

Lys295 carries the post-translational modification N6-(pyridoxal phosphate)lysine.

Belongs to the SelA family. In terms of assembly, homodecamer; pentamer of dimers. Binds only one seryl-tRNA(Sec) per dimer. Pyridoxal 5'-phosphate serves as cofactor.

It is found in the cytoplasm. It carries out the reaction L-seryl-tRNA(Sec) + selenophosphate + H(+) = L-selenocysteinyl-tRNA(Sec) + phosphate. The protein operates within aminoacyl-tRNA biosynthesis; selenocysteinyl-tRNA(Sec) biosynthesis; selenocysteinyl-tRNA(Sec) from L-seryl-tRNA(Sec) (bacterial route): step 1/1. Converts seryl-tRNA(Sec) to selenocysteinyl-tRNA(Sec) required for selenoprotein biosynthesis. The protein is L-seryl-tRNA(Sec) selenium transferase of Salmonella dublin (strain CT_02021853).